The sequence spans 445 residues: GTPase Der (445 aa).

EngA-type G domains lie at 3–167 and 180–353; these read PVIA…YAGQ and IKIA…AAAM. GTP contacts are provided by residues 9 to 16, 56 to 60, 119 to 122, 186 to 193, 233 to 237, and 298 to 301; these read GRPNVGKS, DTGGF, NKAE, DTAGL, and NKWD. In terms of domain architecture, KH-like spans 354–438; the sequence is AKLPTPKLTR…PLRIEFRSSN (85 aa).

The protein belongs to the TRAFAC class TrmE-Era-EngA-EngB-Septin-like GTPase superfamily. EngA (Der) GTPase family. In terms of assembly, associates with the 50S ribosomal subunit.

Its function is as follows. GTPase that plays an essential role in the late steps of ribosome biogenesis. This is GTPase Der from Burkholderia lata (strain ATCC 17760 / DSM 23089 / LMG 22485 / NCIMB 9086 / R18194 / 383).